Here is a 402-residue protein sequence, read N- to C-terminus: tRNA(Met) cytidine acetate ligase (402 aa).

Residues 7 to 20, Gly-102, Asn-171, and Arg-196 each bind ATP; that span reads ITEYNPFHLGHELH.

The protein belongs to the TmcAL family.

The protein localises to the cytoplasm. It catalyses the reaction cytidine(34) in elongator tRNA(Met) + acetate + ATP = N(4)-acetylcytidine(34) in elongator tRNA(Met) + AMP + diphosphate. Functionally, catalyzes the formation of N(4)-acetylcytidine (ac(4)C) at the wobble position of elongator tRNA(Met), using acetate and ATP as substrates. First activates an acetate ion to form acetyladenylate (Ac-AMP) and then transfers the acetyl group to tRNA to form ac(4)C34. This is tRNA(Met) cytidine acetate ligase from Clostridium perfringens (strain ATCC 13124 / DSM 756 / JCM 1290 / NCIMB 6125 / NCTC 8237 / Type A).